A 268-amino-acid polypeptide reads, in one-letter code: Hemin import ATP-binding protein HmuV (268 aa).

The 238-residue stretch at 5–242 folds into the ABC transporter domain; that stretch reads IEARHLSKRA…ETIRDIFEID (238 aa). 37–44 provides a ligand contact to ATP; it reads GPNGAGKS.

It belongs to the ABC transporter superfamily. Heme (hemin) importer (TC 3.A.1.14.5) family. The complex is composed of two ATP-binding proteins (HmuV), two transmembrane proteins (HmuU) and a solute-binding protein (HmuT).

It is found in the cell inner membrane. In terms of biological role, part of the ABC transporter complex HmuTUV involved in hemin import. Responsible for energy coupling to the transport system. This chain is Hemin import ATP-binding protein HmuV, found in Bradyrhizobium diazoefficiens (strain JCM 10833 / BCRC 13528 / IAM 13628 / NBRC 14792 / USDA 110).